The primary structure comprises 395 residues: S-adenosylmethionine synthase (395 aa).

ATP is bound at residue histidine 15. Residue aspartate 17 participates in Mg(2+) binding. A K(+)-binding site is contributed by glutamate 43. 2 residues coordinate L-methionine: glutamate 56 and glutamine 99. The tract at residues 99–109 is flexible loop; sequence QSPDIAMGVDE. Residues 173-175, 239-240, aspartate 248, 254-255, alanine 271, and lysine 275 each bind ATP; these read DGK, RF, and RK. Position 248 (aspartate 248) interacts with L-methionine. Lysine 279 contributes to the L-methionine binding site.

Belongs to the AdoMet synthase family. As to quaternary structure, homotetramer; dimer of dimers. Mg(2+) serves as cofactor. K(+) is required as a cofactor.

It localises to the cytoplasm. The catalysed reaction is L-methionine + ATP + H2O = S-adenosyl-L-methionine + phosphate + diphosphate. Its pathway is amino-acid biosynthesis; S-adenosyl-L-methionine biosynthesis; S-adenosyl-L-methionine from L-methionine: step 1/1. Functionally, catalyzes the formation of S-adenosylmethionine (AdoMet) from methionine and ATP. The overall synthetic reaction is composed of two sequential steps, AdoMet formation and the subsequent tripolyphosphate hydrolysis which occurs prior to release of AdoMet from the enzyme. The polypeptide is S-adenosylmethionine synthase (Desulforudis audaxviator (strain MP104C)).